A 347-amino-acid chain; its full sequence is Protein-glutamate methylesterase/protein-glutamine glutaminase 4 (347 aa).

The Response regulatory domain maps to 3-121 (KVLIVDDSAS…HPNHEREARS (119 aa)). At Asp54 the chain carries 4-aspartylphosphate. The region spanning 157–342 (PARLKAVAIG…PDRIVTALTS (186 aa)) is the CheB-type methylesterase domain. Residues Ser168, His195, and Asp289 contribute to the active site.

The protein belongs to the CheB family. In terms of processing, phosphorylated by CheA. Phosphorylation of the N-terminal regulatory domain activates the methylesterase activity.

The protein localises to the cytoplasm. The catalysed reaction is [protein]-L-glutamate 5-O-methyl ester + H2O = L-glutamyl-[protein] + methanol + H(+). It carries out the reaction L-glutaminyl-[protein] + H2O = L-glutamyl-[protein] + NH4(+). Involved in chemotaxis. Part of a chemotaxis signal transduction system that modulates chemotaxis in response to various stimuli. Catalyzes the demethylation of specific methylglutamate residues introduced into the chemoreceptors (methyl-accepting chemotaxis proteins or MCP) by CheR. Also mediates the irreversible deamidation of specific glutamine residues to glutamic acid. This Geobacter metallireducens (strain ATCC 53774 / DSM 7210 / GS-15) protein is Protein-glutamate methylesterase/protein-glutamine glutaminase 4.